We begin with the raw amino-acid sequence, 190 residues long: GTP cyclohydrolase 1 (190 aa).

Residues cysteine 80, histidine 83, and cysteine 151 each contribute to the Zn(2+) site.

It belongs to the GTP cyclohydrolase I family. In terms of assembly, toroid-shaped homodecamer, composed of two pentamers of five dimers.

It catalyses the reaction GTP + H2O = 7,8-dihydroneopterin 3'-triphosphate + formate + H(+). It functions in the pathway cofactor biosynthesis; 7,8-dihydroneopterin triphosphate biosynthesis; 7,8-dihydroneopterin triphosphate from GTP: step 1/1. This Rickettsia typhi (strain ATCC VR-144 / Wilmington) protein is GTP cyclohydrolase 1.